We begin with the raw amino-acid sequence, 243 residues long: Venom nerve growth factor 1 (243 aa).

The first 18 residues, 1–18, serve as a signal peptide directing secretion; it reads MSMLCYTLIIAFLIGIWA. Residues 19–125 constitute a propeptide that is removed on maturation; sequence APKSEDNVPL…TLNRNIRAKR (107 aa). Residues 47 to 66 show a composition bias toward basic and acidic residues; that stretch reads GLKTSRNTDQRHPAPKKAED. The disordered stretch occupies residues 47-69; that stretch reads GLKTSRNTDQRHPAPKKAEDQEL. Disulfide bonds link Cys-139/Cys-204, Cys-182/Cys-232, and Cys-192/Cys-234. Asn-148 is a glycosylation site (N-linked (GlcNAc...) asparagine).

The protein belongs to the NGF-beta family. Homodimer; non-covalently linked. In terms of tissue distribution, expressed by the venom gland.

Its subcellular location is the secreted. Functionally, nerve growth factor is important for the development and maintenance of the sympathetic and sensory nervous systems. It stimulates division and differentiation of sympathetic and embryonic sensory neurons as well as basal forebrain cholinergic neurons in the brain. Its relevance in the snake venom is not clear. However, it has been shown to inhibit metalloproteinase-dependent proteolysis of platelet glycoprotein Ib alpha, suggesting a metalloproteinase inhibition to prevent metalloprotease autodigestion and/or protection against prey proteases. Binds a lipid between the two protein chains in the homodimer. The lipid-bound form promotes histamine relase from mouse mast cells, contrary to the lipid-free form. The sequence is that of Venom nerve growth factor 1 from Pseudonaja textilis (Eastern brown snake).